Consider the following 196-residue polypeptide: MWFMYLLSWLSLFIQVAFITLAVAAGLYYLAELIEEYTVATSRIIKYMIWFSTAVLIGLYVFERFPTSMIGVGLFTNLVYFGLLQTFPFIMLTSPNFILSCGLVVVNHYLACQFFAEEYYPFSEVLAYFTFCLWIIPFAFFVSLSAGENVLPSTMQPGDDVVSNYFTKGKRGKRLGILVVFSFIKEAILPSRQKIY.

The next 5 membrane-spanning stretches (helical) occupy residues 3 to 23, 42 to 62, 70 to 90, 97 to 117, and 125 to 145; these read FMYL…TLAV, SRII…LYVF, IGVG…FPFI, FILS…FFAE, and VLAY…VSLS.

The protein belongs to the SVP26 family.

It localises to the membrane. In Pongo abelii (Sumatran orangutan), this protein is Protein TEX261 (TEX261).